A 101-amino-acid polypeptide reads, in one-letter code: MATQKIRIRLKAYDYKLLDQSAGEIVETAKRTGAKVAGPIPLPTRINKFTVLRSPHVDKKSREQFEIRTHKRLLDILEPTPQTLDALMKLDLSAGVDVEIK.

It belongs to the universal ribosomal protein uS10 family. In terms of assembly, part of the 30S ribosomal subunit.

Its function is as follows. Involved in the binding of tRNA to the ribosomes. The protein is Small ribosomal subunit protein uS10 of Anaeromyxobacter dehalogenans (strain 2CP-C).